Reading from the N-terminus, the 260-residue chain is UPF0246 protein Bcenmc03_2247 (260 aa).

It belongs to the UPF0246 family.

The sequence is that of UPF0246 protein Bcenmc03_2247 from Burkholderia orbicola (strain MC0-3).